We begin with the raw amino-acid sequence, 174 residues long: Repair DNA polymerase X (174 aa).

Residues 42–51 (REEKMLNDVD) form an involved in ssDNA binding region. Mg(2+) is bound by residues Asp49 and Asp51. A disulfide bridge connects residues Cys81 and Cys86. Residue Asp100 participates in Mg(2+) binding.

This sequence belongs to the DNA polymerase type-X family. The cofactor is Mg(2+).

Its subcellular location is the virion. The catalysed reaction is DNA(n) + a 2'-deoxyribonucleoside 5'-triphosphate = DNA(n+1) + diphosphate. Functionally, error-prone polymerase lacking a proofreading 3'-5' exonuclease which catalyzes the gap-filling reaction during the DNA repair process. Specifically binds intermediates in the single-nucleotide base-excision repair process. Also catalyzes DNA polymerization with low nucleotide-insertion fidelity. Probably acts as a strategic DNA mutase, which gives rise to a rapid emergence of variants. Generates mismatched G-G pairs, in that case, the polymerase first binds the deoxynucleotide followed by mismatch formation. Together with the viral DNA ligase, fills the single nucleotide gaps generated by the AP endonuclease. Binds DNA with high affinity via the helix alphaE. This is Repair DNA polymerase X from Ornithodoros (relapsing fever ticks).